A 394-amino-acid polypeptide reads, in one-letter code: S-adenosylmethionine synthase (394 aa).

Histidine 16 contacts ATP. Residue aspartate 18 coordinates Mg(2+). Glutamate 44 provides a ligand contact to K(+). Residues glutamate 57 and glutamine 100 each coordinate L-methionine. The interval 100 to 110 is flexible loop; it reads QSPDIAQGVDA. ATP contacts are provided by residues 172–174, 239–240, aspartate 248, 254–255, alanine 271, and lysine 275; these read DAK, RF, and RK. Aspartate 248 contributes to the L-methionine binding site. Residue lysine 279 coordinates L-methionine.

This sequence belongs to the AdoMet synthase family. Homotetramer; dimer of dimers. Mg(2+) is required as a cofactor. It depends on K(+) as a cofactor.

It is found in the cytoplasm. It carries out the reaction L-methionine + ATP + H2O = S-adenosyl-L-methionine + phosphate + diphosphate. It participates in amino-acid biosynthesis; S-adenosyl-L-methionine biosynthesis; S-adenosyl-L-methionine from L-methionine: step 1/1. Its function is as follows. Catalyzes the formation of S-adenosylmethionine (AdoMet) from methionine and ATP. The overall synthetic reaction is composed of two sequential steps, AdoMet formation and the subsequent tripolyphosphate hydrolysis which occurs prior to release of AdoMet from the enzyme. The sequence is that of S-adenosylmethionine synthase from Enterococcus faecalis (strain ATCC 700802 / V583).